The following is a 224-amino-acid chain: UPF0758 protein Rpic_2712 (224 aa).

An MPN domain is found at 102–224 (TFESAQSVKD…VYGFLEHGKM (123 aa)). Zn(2+) contacts are provided by H173, H175, and D186. A JAMM motif motif is present at residues 173 to 186 (HNHPTGNTEPSESD).

This sequence belongs to the UPF0758 family.

In Ralstonia pickettii (strain 12J), this protein is UPF0758 protein Rpic_2712.